Consider the following 37-residue polypeptide: Cytochrome b6-f complex subunit 5 (37 aa).

Residues 5–25 (LLSGIVPGLIPITLAGSFVIA) traverse the membrane as a helical segment.

Belongs to the PetG family. As to quaternary structure, the 4 large subunits of the cytochrome b6-f complex are cytochrome b6, subunit IV (17 kDa polypeptide, PetD), cytochrome f and the Rieske protein, while the 4 small subunits are PetG, PetL, PetM and PetN. The complex functions as a dimer.

The protein resides in the plastid membrane. Functionally, component of the cytochrome b6-f complex, which mediates electron transfer between photosystem II (PSII) and photosystem I (PSI), cyclic electron flow around PSI, and state transitions. PetG is required for either the stability or assembly of the cytochrome b6-f complex. In Aneura mirabilis (Parasitic liverwort), this protein is Cytochrome b6-f complex subunit 5.